Here is a 306-residue protein sequence, read N- to C-terminus: Recombination-associated protein RdgC (306 aa).

This sequence belongs to the RdgC family.

It localises to the cytoplasm. Its subcellular location is the nucleoid. Functionally, may be involved in recombination. The sequence is that of Recombination-associated protein RdgC from Pseudomonas paraeruginosa (strain DSM 24068 / PA7) (Pseudomonas aeruginosa (strain PA7)).